The following is a 75-amino-acid chain: UPF0235 protein MSMEG_3845 (75 aa).

Belongs to the UPF0235 family.

The sequence is that of UPF0235 protein MSMEG_3845 from Mycolicibacterium smegmatis (strain ATCC 700084 / mc(2)155) (Mycobacterium smegmatis).